Here is a 432-residue protein sequence, read N- to C-terminus: Adenylosuccinate synthetase (432 aa).

GTP is bound by residues 12–18 (GDEGKGK) and 40–42 (GHT). Catalysis depends on D13, which acts as the Proton acceptor. Mg(2+)-binding residues include D13 and G40. IMP contacts are provided by residues 13-16 (DEGK), 38-41 (NAGH), T129, R143, Q224, T239, and R303. H41 acts as the Proton donor in catalysis. Position 299-305 (299-305 (VTTGRRR)) interacts with substrate. GTP contacts are provided by residues R305, 331–333 (KLD), and 413–415 (GVG).

Belongs to the adenylosuccinate synthetase family. In terms of assembly, homodimer. It depends on Mg(2+) as a cofactor.

It is found in the cytoplasm. It carries out the reaction IMP + L-aspartate + GTP = N(6)-(1,2-dicarboxyethyl)-AMP + GDP + phosphate + 2 H(+). Its pathway is purine metabolism; AMP biosynthesis via de novo pathway; AMP from IMP: step 1/2. In terms of biological role, plays an important role in the de novo pathway of purine nucleotide biosynthesis. Catalyzes the first committed step in the biosynthesis of AMP from IMP. The sequence is that of Adenylosuccinate synthetase from Mycobacterium tuberculosis (strain CDC 1551 / Oshkosh).